The chain runs to 592 residues: NADH-quinone oxidoreductase subunit C/D (592 aa).

The tract at residues 1-183 is NADH dehydrogenase I subunit C; sequence MSAAQSPTAQ…DPYTLTVEGQ (183 aa). The NADH dehydrogenase I subunit D stretch occupies residues 207-592; that stretch reads DYMFLNLGPN…IDFVMADVDR (386 aa).

It in the N-terminal section; belongs to the complex I 30 kDa subunit family. This sequence in the C-terminal section; belongs to the complex I 49 kDa subunit family. In terms of assembly, NDH-1 is composed of 13 different subunits. Subunits NuoB, CD, E, F, and G constitute the peripheral sector of the complex.

The protein localises to the cell inner membrane. It catalyses the reaction a quinone + NADH + 5 H(+)(in) = a quinol + NAD(+) + 4 H(+)(out). Its function is as follows. NDH-1 shuttles electrons from NADH, via FMN and iron-sulfur (Fe-S) centers, to quinones in the respiratory chain. The immediate electron acceptor for the enzyme in this species is believed to be ubiquinone. Couples the redox reaction to proton translocation (for every two electrons transferred, four hydrogen ions are translocated across the cytoplasmic membrane), and thus conserves the redox energy in a proton gradient. The sequence is that of NADH-quinone oxidoreductase subunit C/D from Chromohalobacter salexigens (strain ATCC BAA-138 / DSM 3043 / CIP 106854 / NCIMB 13768 / 1H11).